The following is a 185-amino-acid chain: Large ribosomal subunit protein uL5 (185 aa).

It belongs to the universal ribosomal protein uL5 family. As to quaternary structure, part of the 50S ribosomal subunit; part of the 5S rRNA/L5/L18/L25 subcomplex. Contacts the 5S rRNA and the P site tRNA. Forms a bridge to the 30S subunit in the 70S ribosome.

This is one of the proteins that bind and probably mediate the attachment of the 5S RNA into the large ribosomal subunit, where it forms part of the central protuberance. In the 70S ribosome it contacts protein S13 of the 30S subunit (bridge B1b), connecting the 2 subunits; this bridge is implicated in subunit movement. Contacts the P site tRNA; the 5S rRNA and some of its associated proteins might help stabilize positioning of ribosome-bound tRNAs. The chain is Large ribosomal subunit protein uL5 from Brucella abortus (strain S19).